A 263-amino-acid polypeptide reads, in one-letter code: Microtubule-associated protein RP/EB family member 1 (263 aa).

Residues 14 to 116 (NLSRHDMLAW…FVQWFKKFFD (103 aa)) form the Calponin-homology (CH) domain. Residues 180–250 (KKAAGDDESA…LYATDEGFVI (71 aa)) form the EB1 C-terminal domain.

It belongs to the MAPRE family.

It localises to the cytoplasm. Its subcellular location is the cytoskeleton. It is found in the microtubule organizing center. The protein resides in the centrosome. The protein localises to the golgi apparatus. It localises to the spindle. Its subcellular location is the spindle pole. Functionally, plus-end tracking protein (+TIP) that binds to the plus-end of microtubules and regulates the dynamics of the microtubule cytoskeleton. Promotes cytoplasmic microtubule nucleation and elongation. Involved in mitotic spindle positioning by stabilizing microtubules and promoting dynamic connection between astral microtubules and the cortex during mitotic chromosome segregation. This Coturnix coturnix (Common quail) protein is Microtubule-associated protein RP/EB family member 1 (MAPRE1).